The chain runs to 391 residues: 3-demethoxyubiquinol 3-hydroxylase (391 aa).

Belongs to the UbiH/COQ6 family. Component of the Ubi complex metabolon, which regroups five ubiquinone biosynthesis proteins (UbiE, UbiF, UbiG, UbiH and UbiI) and two accessory factors (UbiK and the lipid-binding protein UbiJ). FAD serves as cofactor.

The protein resides in the cytoplasm. It carries out the reaction a 5-methoxy-2-methyl-3-(all-trans-polyprenyl)benzene-1,4-diol + AH2 + O2 = a 3-demethylubiquinol + A + H2O. Its pathway is cofactor biosynthesis; ubiquinone biosynthesis. Catalyzes the hydroxylation of 2-octaprenyl-3-methyl-6-methoxy-1,4-benzoquinol during ubiquinone biosynthesis. The protein is 3-demethoxyubiquinol 3-hydroxylase (ubiF) of Escherichia coli (strain K12).